The primary structure comprises 196 residues: MRFFNKYKLFLDCAYKHLNIVLLDFKTNTVVDQLTIPVQQNLTELAVYHLEKLLKKNKVRNNTVRQFYVTTGPGSFTGQRVGAIIAKTWCTVNPNCQLFALNSLRLQIPYGCGISKISAGNEKNYCGLFTETTSEIALLAKPDFVKLCKANTELPVYENFENIDSIEELFLNNIERFELVENPQNLELLYLKDPVN.

This is an uncharacterized protein from Mycoplasma pneumoniae (strain ATCC 29342 / M129 / Subtype 1) (Mycoplasmoides pneumoniae).